Consider the following 480-residue polypeptide: CASP8 and FADD-like apoptosis regulator (480 aa).

DED domains follow at residues 1 to 73 (MSAE…RILK) and 92 to 170 (DYRV…KIQK). Residues 1–195 (MSAEVIHQVE…LQAAIQKSLK (195 aa)) are interaction with CASP8. The interaction with FADD stretch occupies residues 1–227 (MSAEVIHQVE…GAQQEPVKKS (227 aa)). An interaction with CASP8 propeptide region spans residues 1-305 (MSAEVIHQVE…FACMPEHRDY (305 aa)). Residues 1 to 435 (MSAEVIHQVE…CLSQKLRQER (435 aa)) form a not proteolytically processed and involved in apoptosis inhibition region. The segment at 192-435 (KSLKDPSNNF…CLSQKLRQER (244 aa)) is interaction with CASP3. Positions 192 to 480 (KSLKDPSNNF…LRKKLILSYT (289 aa)) are interaction with TRAF1 and TRAF2. The interval 217-480 (LGAQQEPVKK…LRKKLILSYT (264 aa)) is interaction with CASP8 subunits p18 and p10. A caspase region spans residues 263 to 358 (ETELLRDTFT…AGKPKMFFIQ (96 aa)). The segment at 370–480 (SSLLEVDGPA…LRKKLILSYT (111 aa)) is interaction with CASP8.

Belongs to the peptidase C14A family. TNFRSF6 stimulation triggers recruitment to the death-inducing signaling complex (DISC) formed by TNFRSF6, FADD and CASP8. A proteolytic fragment (p43) stays associated with the DISC. Also interacts with FADD, CASP8, CASP3, TRAF1, TRAF2 and Bcl-X(L) (in vitro). Interacts with RIPK1. As to quaternary structure, (Microbial infection) Interacts with HBV protein X. Post-translationally, proteolytically processed by CASP8 generating subunit p43 and p12. As to expression, widely expressed. Higher expression in skeletal muscle, pancreas, heart, kidney, placenta, and peripheral blood leukocytes. Also detected in diverse cell lines. Isoform 8 is predominantly expressed in testis and skeletal muscle.

In terms of biological role, apoptosis regulator protein which may function as a crucial link between cell survival and cell death pathways in mammalian cells. Acts as an inhibitor of TNFRSF6 mediated apoptosis. A proteolytic fragment (p43) is likely retained in the death-inducing signaling complex (DISC) thereby blocking further recruitment and processing of caspase-8 at the complex. Full length and shorter isoforms have been shown either to induce apoptosis or to reduce TNFRSF-triggered apoptosis. Lacks enzymatic (caspase) activity. The chain is CASP8 and FADD-like apoptosis regulator (CFLAR) from Homo sapiens (Human).